Reading from the N-terminus, the 84-residue chain is Beta-cardiotoxin CTX15 (84 aa).

A signal peptide spans 1–21 (MKTLLLTLVVVTIVCLDLGYT). 4 disulfides stabilise this stretch: cysteine 24–cysteine 43, cysteine 36–cysteine 61, cysteine 65–cysteine 76, and cysteine 77–cysteine 82.

Belongs to the three-finger toxin family. Short-chain subfamily. Aminergic toxin sub-subfamily. In terms of tissue distribution, expressed by the venom gland.

It localises to the secreted. Acts as a beta-blocker by binding to beta-1 and beta-2 adrenergic receptors (ADRB1 and ADRB2). It dose-dependently decreases the heart rate (bradycardia), whereas conventional cardiotoxins increases it. At 100 mg/kg, intraperitoneal injection into mice provokes labored breathing, impaired locomotion, lack of response to external stimuli, and death (after 30 minutes). The polypeptide is Beta-cardiotoxin CTX15 (Ophiophagus hannah (King cobra)).